Reading from the N-terminus, the 102-residue chain is Small ribosomal subunit protein uS10 (102 aa).

The protein belongs to the universal ribosomal protein uS10 family. Part of the 30S ribosomal subunit.

Involved in the binding of tRNA to the ribosomes. The sequence is that of Small ribosomal subunit protein uS10 from Cereibacter sphaeroides (strain ATCC 17029 / ATH 2.4.9) (Rhodobacter sphaeroides).